A 313-amino-acid polypeptide reads, in one-letter code: uncharacterized protein (313 aa).

This is an uncharacterized protein from Acanthamoeba polyphaga mimivirus (APMV).